A 789-amino-acid chain; its full sequence is GDH/6PGL endoplasmic bifunctional protein (789 aa).

An N-terminal signal peptide occupies residues 1–16; sequence MLLAAMCLALLGCLQA. Gln-17 carries the post-translational modification Pyrrolidone carboxylic acid. The segment at 17-524 is hexose-6-phosphate dehydrogenase; it reads QELKGHVSII…GGQLTFSQQQ (508 aa). Residues 29 to 36 and Tyr-146 each bind NADP(+); that span reads GATGDLAK. N-linked (GlcNAc...) asparagine glycosylation occurs at Asn-154. Lys-171 is a binding site for NADP(+). D-glucose 6-phosphate contacts are provided by residues Lys-171, 201 to 205, Glu-240, and Asp-259; that span reads HYLGK. Lys-205 carries the post-translational modification N6-succinyllysine. Residue His-264 is the Proton acceptor of the active site. N-linked (GlcNAc...) asparagine glycosylation occurs at Asn-279. Positions 357 and 362 each coordinate D-glucose 6-phosphate. Residue Arg-367 participates in NADP(+) binding. N6-succinyllysine is present on Lys-424. The tract at residues 525-538 is linker; sequence LEVLIPDLGSVPKP. Residues 539–789 are 6-phosphogluconolactonase; sequence SDFQVLGARY…WYMDYEAFLG (251 aa). Trp-615 serves as a coordination point for NADP(+). N-linked (GlcNAc...) asparagine glycosylation occurs at Asn-681.

This sequence in the N-terminal section; belongs to the glucose-6-phosphate dehydrogenase family. The protein in the C-terminal section; belongs to the glucosamine/galactosamine-6-phosphate isomerase family. 6-phosphogluconolactonase subfamily. In terms of assembly, homodimer. In terms of tissue distribution, expressed in liver (at protein level). Expressed in muscles. Expressed in adipose tissues.

The protein resides in the endoplasmic reticulum lumen. It catalyses the reaction D-glucose 6-phosphate + NAD(+) = 6-phospho-D-glucono-1,5-lactone + NADH + H(+). It carries out the reaction D-glucose 6-phosphate + NADP(+) = 6-phospho-D-glucono-1,5-lactone + NADPH + H(+). The enzyme catalyses 6-phospho-D-glucono-1,5-lactone + H2O = 6-phospho-D-gluconate + H(+). The catalysed reaction is 2-deoxy-D-glucose 6-phosphate + NAD(+) = 2-deoxy-6-phospho-D-glucono-1,5-lactone + NADH + H(+). It catalyses the reaction 2-deoxy-D-glucose 6-phosphate + NADP(+) = 2-deoxy-6-phospho-D-glucono-1,5-lactone + NADPH + H(+). It carries out the reaction D-galactose 6-phosphate + NADP(+) = 6-phospho-D-galactono-1,5-lactone + NADPH + H(+). The enzyme catalyses D-galactose 6-phosphate + NAD(+) = 6-phospho-D-galactono-1,5-lactone + NADH + H(+). The catalysed reaction is D-glucosamine 6-phosphate + NADP(+) = 2-amino-2-deoxy-6-phospho-D-glucono-1,5-lactone + NADPH + 2 H(+). It catalyses the reaction D-glucose + NAD(+) = D-glucono-1,5-lactone + NADH + H(+). It carries out the reaction D-glucose + NADP(+) = D-glucono-1,5-lactone + NADPH + H(+). The enzyme catalyses D-glucose 6-sulfate + NADP(+) = 6-sulfo-D-glucono-1,5-lactone + NADPH + H(+). It functions in the pathway carbohydrate degradation; pentose phosphate pathway; D-ribulose 5-phosphate from D-glucose 6-phosphate (oxidative stage). The protein operates within carbohydrate degradation; pentose phosphate pathway; D-ribulose 5-phosphate from D-glucose 6-phosphate (oxidative stage): step 2/3. In terms of biological role, bifunctional enzyme localized in the lumen of the endoplasmic reticulum that catalyzes the first two steps of the oxidative branch of the pentose phosphate pathway/shunt, an alternative to glycolysis and a major source of reducing power and metabolic intermediates for biosynthetic processes. Has a hexose-6-phosphate dehydrogenase activity, with broad substrate specificity compared to glucose-6-phosphate 1-dehydrogenase/G6PD, and catalyzes the first step of the pentose phosphate pathway. In addition, acts as a 6-phosphogluconolactonase and catalyzes the second step of the pentose phosphate pathway. May have a dehydrogenase activity for alternative substrates including glucosamine 6-phosphate and glucose 6-sulfate. The main function of this enzyme is to provide reducing equivalents such as NADPH to maintain the adequate levels of reductive cofactors in the oxidizing environment of the endoplasmic reticulum. By producing NADPH that is needed by reductases of the lumen of the endoplasmic reticulum like corticosteroid 11-beta-dehydrogenase isozyme 1/HSD11B1, indirectly regulates their activity. This chain is GDH/6PGL endoplasmic bifunctional protein, found in Mus musculus (Mouse).